Here is a 134-residue protein sequence, read N- to C-terminus: Transmembrane protein 100 (134 aa).

Residues 1–23 (MTEESTKENLGAPKSPTPVTMEK) form a disordered region. Position 15 is a phosphoserine (Ser15). 2 helical membrane passes run 56 to 76 (CIIP…AVAY) and 84 to 104 (IISI…ASSA). A Phosphoserine modification is found at Ser121.

Interacts (via C-terminus) with TRPA1 and TRPV1. Interacts with TASOR. In terms of tissue distribution, expressed in dorsal root ganglia. Expressed in neurons as well as nerve fiber bundles connecting ganglia and fibers innervating muscle layer of the gastric body, jejunum, and proximal colon. Expressed in arterial endothelial cells and neurons of the central nervous system and peripheral nervous system (at protein level). Expressed strongly in lung, weakly in brain, heart and muscle. Expressed in enteric neurons and vascular tissue in the muscularis propria of the gastrointestinal tract.

Its subcellular location is the cell membrane. The protein localises to the membrane. It localises to the perikaryon. The protein resides in the cytoplasm. It is found in the perinuclear region. Its subcellular location is the endoplasmic reticulum. Its function is as follows. Plays a role during embryonic arterial endothelium differentiation and vascular morphogenesis through the ACVRL1 receptor-dependent signaling pathway upon stimulation by bone morphogenetic proteins, such as GDF2/BMP9 and BMP10. Involved in the regulation of nociception, acting as a modulator of the interaction between TRPA1 and TRPV1, two molecular sensors and mediators of pain signals in dorsal root ganglia (DRG) neurons. Mechanistically, it weakens their interaction, thereby releasing the inhibition of TRPA1 by TRPV1 and increasing the single-channel open probability of the TRPA1-TRPV1 complex. The chain is Transmembrane protein 100 (Tmem100) from Mus musculus (Mouse).